We begin with the raw amino-acid sequence, 54 residues long: Ovomucoid (54 aa).

Residues 4–54 (VDCSDYPKPACTVEYMPLCGSDNKTYDNKCNFCNAVVDSNGTLTLSHFGKC) form the Kazal-like domain. Cystine bridges form between Cys-6-Cys-36, Cys-14-Cys-33, and Cys-22-Cys-54. Asn-43 carries an N-linked (GlcNAc...) asparagine glycan.

The protein resides in the secreted. The protein is Ovomucoid of Anser anser anser (Western greylag goose).